A 965-amino-acid polypeptide reads, in one-letter code: Transmembrane channel-like protein 5 (965 aa).

Polar residues-rich tracts occupy residues 1 to 10 (MSSFHKNSSY) and 20 to 31 (SGSQNHTQNYLR). The tract at residues 1–235 (MSSFHKNSSY…GAEEGDVYSP (235 aa)) is disordered. At 1–417 (MSSFHKNSSY…YFSFLRWLLK (417 aa)) the chain is on the extracellular side. Positions 61 to 70 (TNPDYHHSLA) are enriched in basic and acidic residues. Positions 166–181 (QGNSYHSGPRSHSNLP) are enriched in polar residues. At Ser248 the chain carries Phosphoserine. The helical transmembrane segment at 418-438 (FNIFSFVMNFSFIIIPQFTVG) threads the bilayer. The Cytoplasmic portion of the chain corresponds to 439–444 (EKNTLQ). A helical membrane pass occupies residues 445 to 467 (FTGLEFFTGAGYFRETVMYYGFY). At 468-484 (TNSTIRHRMGGASYNMQ) the chain is on the extracellular side. A helical membrane pass occupies residues 485–505 (LAYIFTIGACLVICFFSLLFS). The Cytoplasmic segment spans residues 506 to 578 (MAKYFRNNFI…NQKLTRFSVH (73 aa)). A helical membrane pass occupies residues 579–599 (VAAWLVSTGITAACCVAVYYL). Over 600 to 613 (AEYNSEFLKTHKNP) the chain is Extracellular. A helical membrane pass occupies residues 614-634 (GAVLLLPFVVSCINLAVPRFY). The Cytoplasmic portion of the chain corresponds to 635-657 (SMFRLVERYEIPRQEVYVLLIRN). A helical transmembrane segment spans residues 658-678 (IFLKISIVGILCYYWLNIVAL). Topologically, residues 679–691 (SGEECWETLIGQD) are extracellular. Residues 692 to 712 (IYRLLLMDFVFSLADSLLGEF) form a helical membrane-spanning segment. The Cytoplasmic portion of the chain corresponds to 713-747 (LRRLIGMKFITSLSLQEFDIARNVLELIYAQTLAW). A helical transmembrane segment spans residues 748–768 (LGIFFCPLLPFIQMITLFIMF). Residues 769–794 (YVKNVSLMMNFQPPSKAWRASQMITF) are Extracellular-facing. A helical transmembrane segment spans residues 795-815 (FIFLLFFPSFTGVLCTLAITI). The Cytoplasmic portion of the chain corresponds to 816–859 (WRLKPSADCGPFRGLPSFIQSIYSWIDTLSHRPGYLWVVWIYQN). Residues 860–880 (LIGSVHFFFILTLIVLIITYL) traverse the membrane as a helical segment. The Extracellular portion of the chain corresponds to 881 to 965 (YWQITEGRKV…RSMQEENAIA (85 aa)).

This sequence belongs to the TMC family.

It is found in the membrane. Probable component of an ion channel. Molecular function hasn't been characterized yet. The protein is Transmembrane channel-like protein 5 of Rattus norvegicus (Rat).